The chain runs to 485 residues: Homeobox protein unplugged (485 aa).

3 disordered regions span residues 1–65 (MERP…QEQE), 114–157 (PAGH…DTRF), and 212–325 (GMAQ…RRTA). Residues 54–64 (RDQEQEAEQEQ) show a composition bias toward acidic residues. Residues 114–128 (PAGHPAAQQPQAQAQ) show a composition bias toward low complexity. Composition is skewed to polar residues over residues 223–234 (QAHSSPAKSGSH) and 254–267 (DSCS…SPRN). Residues 284–293 (DSEDCSDDEG) are compositionally biased toward acidic residues. The segment covering 308-317 (SQGNGSSSNS) has biased composition (low complexity). The homeobox DNA-binding region spans 319-378 (SRRRRTAFTSEQLLELEREFHAKKYLSLTERSQIATSLKLSEVQVKIWFQNRRAKWKRVK).

As to expression, expressed in the neuroectodermal and mesectodermal cells at the ventral midline of stage 8 embryos, Subsequently, expression domains in the CNS widen and have their most anterior border in the posterior deutocerebrum. Oc/otd and unpg are mutual repressors at the interface of their brain-specific expression domains. Expression fades during germ band retraction and is then restricted to subset of cells by stage 14. Expressed in the founder cells of the cerebral branch within the first tracheal metamere. Outside the CNS, expression is seen in two clusters of ectodermal cells located laterally within the labial and first thoracic segments of stage 9 embryos. By stage 13, the expression is detected in a few cells close to the dorsal midline of the embryos.

It is found in the nucleus. Plays a regulatory role in neural branching of the tracheae: segment-specific aspects of these neural branching patterns appear to be generated by homeotic regulation of expression. May have a role with oc/otd in the postembryonic development of the brain. The chain is Homeobox protein unplugged from Drosophila melanogaster (Fruit fly).